The sequence spans 725 residues: Fatty acid oxidation complex subunit alpha (725 aa).

The segment at 1-189 is enoyl-CoA hydratase/isomerase; the sequence is MIYQGENLSV…ALGMIDGVVS (189 aa). Aspartate 296 is a substrate binding site. A 3-hydroxyacyl-CoA dehydrogenase region spans residues 311–725; that stretch reads EPVTSAAVLG…APQSLSAPSA (415 aa). Residues methionine 324, aspartate 343, 400–402, lysine 407, and serine 429 each bind NAD(+); that span reads VVE. Histidine 450 (for 3-hydroxyacyl-CoA dehydrogenase activity) is an active-site residue. Asparagine 453 lines the NAD(+) pocket. Substrate contacts are provided by asparagine 500 and tyrosine 660.

In the N-terminal section; belongs to the enoyl-CoA hydratase/isomerase family. This sequence in the C-terminal section; belongs to the 3-hydroxyacyl-CoA dehydrogenase family. In terms of assembly, heterotetramer of two alpha chains (FadB) and two beta chains (FadA).

It carries out the reaction a (3S)-3-hydroxyacyl-CoA + NAD(+) = a 3-oxoacyl-CoA + NADH + H(+). The catalysed reaction is a (3S)-3-hydroxyacyl-CoA = a (2E)-enoyl-CoA + H2O. It catalyses the reaction a 4-saturated-(3S)-3-hydroxyacyl-CoA = a (3E)-enoyl-CoA + H2O. The enzyme catalyses (3S)-3-hydroxybutanoyl-CoA = (3R)-3-hydroxybutanoyl-CoA. It carries out the reaction a (3Z)-enoyl-CoA = a 4-saturated (2E)-enoyl-CoA. The catalysed reaction is a (3E)-enoyl-CoA = a 4-saturated (2E)-enoyl-CoA. It participates in lipid metabolism; fatty acid beta-oxidation. In terms of biological role, involved in the aerobic and anaerobic degradation of long-chain fatty acids via beta-oxidation cycle. Catalyzes the formation of 3-oxoacyl-CoA from enoyl-CoA via L-3-hydroxyacyl-CoA. It can also use D-3-hydroxyacyl-CoA and cis-3-enoyl-CoA as substrate. The sequence is that of Fatty acid oxidation complex subunit alpha from Aliivibrio fischeri (strain MJ11) (Vibrio fischeri).